The following is a 314-amino-acid chain: Deoxyribonuclease-1-like 1 (314 aa).

The signal sequence occupies residues 1-37; it reads MPFGQPGFLWRVPDAHIAMRGLVMAPLLILLVGGTEA. The N-linked (GlcNAc...) asparagine glycan is linked to Asn102. Glu113 is a catalytic residue. Asn133 carries an N-linked (GlcNAc...) asparagine glycan. His164 is an active-site residue. Residues Cys203 and Cys240 are joined by a disulfide bond. N-linked (GlcNAc...) asparagine glycosylation occurs at Asn239.

This sequence belongs to the DNase I family. As to expression, highly expressed in heart and skeletal muscles. Low expression in brain and thymus. Intermediated expression in other tissues.

Its subcellular location is the endoplasmic reticulum. In Mus musculus (Mouse), this protein is Deoxyribonuclease-1-like 1 (Dnase1l1).